We begin with the raw amino-acid sequence, 873 residues long: Alanine--tRNA ligase (873 aa).

The Zn(2+) site is built by histidine 563, histidine 567, cysteine 665, and histidine 669.

Belongs to the class-II aminoacyl-tRNA synthetase family. It depends on Zn(2+) as a cofactor.

The protein resides in the cytoplasm. It catalyses the reaction tRNA(Ala) + L-alanine + ATP = L-alanyl-tRNA(Ala) + AMP + diphosphate. In terms of biological role, catalyzes the attachment of alanine to tRNA(Ala) in a two-step reaction: alanine is first activated by ATP to form Ala-AMP and then transferred to the acceptor end of tRNA(Ala). Also edits incorrectly charged Ser-tRNA(Ala) and Gly-tRNA(Ala) via its editing domain. In Parabacteroides distasonis (strain ATCC 8503 / DSM 20701 / CIP 104284 / JCM 5825 / NCTC 11152), this protein is Alanine--tRNA ligase.